The primary structure comprises 239 residues: Ribonuclease 3 (239 aa).

The RNase III domain occupies 18–141 (YLTLEKALGY…LMAGVYLEAG (124 aa)). Glu-54 lines the Mg(2+) pocket. Residue Asp-58 is part of the active site. Mg(2+) is bound by residues Ser-127 and Glu-130. Glu-130 is a catalytic residue. Positions 168 to 237 (DYKTALQELT…AYQALQKLKE (70 aa)) constitute a DRBM domain.

It belongs to the ribonuclease III family. As to quaternary structure, homodimer. It depends on Mg(2+) as a cofactor.

It is found in the cytoplasm. The enzyme catalyses Endonucleolytic cleavage to 5'-phosphomonoester.. Functionally, digests double-stranded RNA. Involved in the processing of primary rRNA transcript to yield the immediate precursors to the large and small rRNAs (23S and 16S). Processes some mRNAs, and tRNAs when they are encoded in the rRNA operon. Processes pre-crRNA and tracrRNA of type II CRISPR loci if present in the organism. In Helicobacter pylori (strain P12), this protein is Ribonuclease 3.